Here is a 167-residue protein sequence, read N- to C-terminus: S-ribosylhomocysteine lyase (167 aa).

Fe cation is bound by residues H54, H58, and C128.

The protein belongs to the LuxS family. As to quaternary structure, homodimer. Requires Fe cation as cofactor.

The catalysed reaction is S-(5-deoxy-D-ribos-5-yl)-L-homocysteine = (S)-4,5-dihydroxypentane-2,3-dione + L-homocysteine. Functionally, involved in the synthesis of autoinducer 2 (AI-2) which is secreted by bacteria and is used to communicate both the cell density and the metabolic potential of the environment. The regulation of gene expression in response to changes in cell density is called quorum sensing. Catalyzes the transformation of S-ribosylhomocysteine (RHC) to homocysteine (HC) and 4,5-dihydroxy-2,3-pentadione (DPD). The chain is S-ribosylhomocysteine lyase from Sulfurimonas denitrificans (strain ATCC 33889 / DSM 1251) (Thiomicrospira denitrificans (strain ATCC 33889 / DSM 1251)).